We begin with the raw amino-acid sequence, 386 residues long: Ribonucleoside-diphosphate reductase subunit M2 (386 aa).

The span at 1 to 24 (MSSTRSPLKTKNENTISTKMNNMS) shows a compositional bias: polar residues. The segment at 1–36 (MSSTRSPLKTKNENTISTKMNNMSFVDKENTPPSLS) is disordered. Phosphoserine is present on serine 6. Position 31 is a phosphothreonine (threonine 31). Residues aspartate 135, glutamate 166, and histidine 169 each contribute to the Fe cation site. Tyrosine 173 is an active-site residue. Fe cation contacts are provided by glutamate 229, glutamate 263, and histidine 266.

This sequence belongs to the ribonucleoside diphosphate reductase small chain family. In terms of assembly, heterodimer of a large and a small subunit. Requires Fe cation as cofactor.

The protein resides in the cytoplasm. The enzyme catalyses a 2'-deoxyribonucleoside 5'-diphosphate + [thioredoxin]-disulfide + H2O = a ribonucleoside 5'-diphosphate + [thioredoxin]-dithiol. Functionally, provides the precursors necessary for DNA synthesis. Catalyzes the biosynthesis of deoxyribonucleotides from the corresponding ribonucleotides. This Danio rerio (Zebrafish) protein is Ribonucleoside-diphosphate reductase subunit M2 (rrm2).